We begin with the raw amino-acid sequence, 296 residues long: ATP synthase gamma chain (296 aa).

Belongs to the ATPase gamma chain family. In terms of assembly, F-type ATPases have 2 components, CF(1) - the catalytic core - and CF(0) - the membrane proton channel. CF(1) has five subunits: alpha(3), beta(3), gamma(1), delta(1), epsilon(1). CF(0) has three main subunits: a, b and c.

It is found in the cell inner membrane. Its function is as follows. Produces ATP from ADP in the presence of a proton gradient across the membrane. The gamma chain is believed to be important in regulating ATPase activity and the flow of protons through the CF(0) complex. This chain is ATP synthase gamma chain, found in Rhodopirellula baltica (strain DSM 10527 / NCIMB 13988 / SH1).